The chain runs to 97 residues: UstYa family oxidase VicYc (97 aa).

2 short sequence motifs (HXXHC) span residues H11–C15 and H38–C42.

The protein belongs to the ustYa family.

It participates in mycotoxin biosynthesis. Functionally, ustYa family oxidase, part of the gene cluster that mediates the biosynthesis of the secondary metabolite victorin, the molecular basis for Victoria blight of oats. The role of vicYc within the pathway has still to be determined. The pathway starts with the processing of the precursor vicA1 by several endopeptidases including kexin proteases as well as the cluster-specific S28 family peptidases vicPa and vicPb to produce 7 identical copies of the hexapeptide Gly-Leu-Lys-Leu-Ala-Phe. After being excised from the precursor peptide, the core peptides are cyclized and modified post-translationally by enzymes encoded within the gene cluster. The ustYa family oxidase vicYb is required for the formation of the macrocycle in victorin and the copper amine oxidases (CAOs) vicK1 and vicK2 are responsible for converting victorin to the active form by oxidizing the N-terminal glycyl residue in the peptides to glyoxylate. Relaxed substrate specificity of enzymes in the victorin biosynthetic pathway results in a metabolic grid that produces a set of analogs including victorinines B, C, E or HV-toxin M. The protein is UstYa family oxidase VicYc of Bipolaris victoriae (strain FI3) (Victoria blight of oats agent).